The following is a 210-amino-acid chain: 3-hexulose-6-phosphate synthase (210 aa).

It belongs to the HPS/KGPDC family. HPS subfamily.

It carries out the reaction D-ribulose 5-phosphate + formaldehyde = D-arabino-hex-3-ulose 6-phosphate. The protein operates within one-carbon metabolism; formaldehyde assimilation via RuMP pathway; D-fructose 6-phosphate from D-ribulose 5-phosphate and formaldehyde: step 1/2. Its function is as follows. Catalyzes the condensation of ribulose 5-phosphate with formaldehyde to form 3-hexulose 6-phosphate. The sequence is that of 3-hexulose-6-phosphate synthase from Staphylococcus aureus (strain USA300).